We begin with the raw amino-acid sequence, 282 residues long: Protease HtpX homolog (282 aa).

2 consecutive transmembrane segments (helical) span residues 7–26 (TTVL…GAVG) and 30–49 (GMMI…YWFS). His131 lines the Zn(2+) pocket. Glu132 is a catalytic residue. His135 is a Zn(2+) binding site. Transmembrane regions (helical) follow at residues 141 to 161 (ILVS…ARMA) and 183 to 203 (LGLV…QLAI). Position 208 (Glu208) interacts with Zn(2+).

The protein belongs to the peptidase M48B family. The cofactor is Zn(2+).

The protein resides in the cell inner membrane. This chain is Protease HtpX homolog, found in Syntrophobacter fumaroxidans (strain DSM 10017 / MPOB).